A 395-amino-acid chain; its full sequence is RNA demethylase ALKBH5 (395 aa).

Disordered stretches follow at residues 1–28 (MAAA…AGSR) and 47–83 (AAEP…EEEA). The residue at position 2 (alanine 2) is an N-acetylalanine. Lysine 58 is covalently cross-linked (Glycyl lysine isopeptide (Lys-Gly) (interchain with G-Cter in ubiquitin)). A compositionally biased stretch (basic and acidic residues) spans 60-83 (KYQEDSDPERSDYEEHQLQKEEEA). Phosphoserine occurs at positions 65 and 70. The stretch at 68 to 117 (ERSDYEEHQLQKEEEARKVKSGIRQIRLFSQDECSKIEARIDEVVSRAEK) forms a coiled coil. Position 72 is a phosphotyrosine (tyrosine 72). Residue lysine 87 forms a Glycyl lysine isopeptide (Lys-Gly) (interchain with G-Cter in SUMO1) linkage. Serine 88 bears the Phosphoserine mark. Lysine 133 carries the post-translational modification N6-acetyllysine. Tyrosine 140 is an active-site residue. Residues asparagine 194, tyrosine 196, and histidine 205 each coordinate 2-oxoglutarate. An intrachain disulfide couples cysteine 231 to cysteine 268. N6-acetyllysine is present on lysine 236. Positions 267 and 278 each coordinate 2-oxoglutarate. Residues 294–395 (ETKSLSSSTL…PTRKVKMRRH (102 aa)) form a disordered region. Low complexity predominate over residues 296–306 (KSLSSSTLPPS). A Glycyl lysine isopeptide (Lys-Gly) (interchain with G-Cter in SUMO1) cross-link involves residue lysine 322. Serine 326 carries the post-translational modification Phosphoserine. Residue lysine 329 forms a Glycyl lysine isopeptide (Lys-Gly) (interchain with G-Cter in SUMO2) linkage. Basic and acidic residues predominate over residues 329 to 350 (KADPDAAHRPRILEMDKEENRR). Arginine 360 is modified (omega-N-methylarginine). Serine 362, serine 372, serine 375, and serine 385 each carry phosphoserine.

It belongs to the alkB family. In terms of assembly, monomer. Interacts with RBM33; promoting desumoylation by SENP1 and recruitment to N(6)-methyladenosine-containing mRNAs. Interacts (when acetylated by KAT8) with PSPC1; interaction facilitates recognition of N(6)-methyladenosine (m6A) mRNA. Fe(2+) is required as a cofactor. Post-translationally, phosphorylated at Ser-88 and Ser-326 in response to reactive oxygen species (ROS), promoting sumoylation and inactivation. Acetylated by KAT8 at Lys-236, promoting interaction with PSPC1, thereby facilitating recognition of N(6)-methyladenosine (m6A) mRNA by ALKBH5. Deacetylated at Lys-236 by HDAC7. In terms of processing, sumoylated at Lys-87 and Lys-322 by PIAS4 following phosphorylation at Ser-88 and Ser-326 in response to reactive oxygen species (ROS), inhibiting the RNA demethylase activity. Desumoylated by SENP1; relieving RNA demethylase inhibition, leading to N(6)-methyladenosine-containing mRNAs demethylation. Post-translationally, ubiquitinated at Lys-58 via 'Lys-48'-linked polyubiquitin chain, leading to its degradation by the proteasome. Deubiquitinated at Lys-58 by USP9X, promoting its stabilizazion. As to expression, widely expressed, with highest expression in testis. In testis, present in almost all testicular cell types except elongating and elongated spermatids (at protein level). Among spermatogenic cells, present at high level in spermatocytes; medium levels in spermatogonia and lower levels in round spermatids (at protein level).

The protein localises to the nucleus speckle. It carries out the reaction an N(6)-methyladenosine in mRNA + 2-oxoglutarate + O2 = an adenosine in mRNA + formaldehyde + succinate + CO2. With respect to regulation, RNA demethylase activity is inhibited following sumoylation. Inhibition is relieved following desumoylation. Inhibited by histone demethylase inhibitor IOX1. Dioxygenase that specifically demethylates N(6)-methyladenosine (m6A) RNA, the most prevalent internal modification of messenger RNA (mRNA) in higher eukaryotes. Demethylates RNA by oxidative demethylation, which requires molecular oxygen, alpha-ketoglutarate and iron. Demethylation of m6A mRNA affects mRNA processing, translation and export. Can also demethylate N(6)-methyladenosine in single-stranded DNA (in vitro). Required for the late meiotic and haploid phases of spermatogenesis by mediating m6A demethylation in spermatocytes and round spermatids: m6A demethylation of target transcripts is required for correct splicing and the production of longer 3'-UTR mRNAs in male germ cells. Involved in paraspeckle assembly, a nuclear membraneless organelle, by undergoing liquid-liquid phase separation. Paraspeckle assembly is coupled with m6A demethylation of RNAs, such as NEAT1 non-coding RNA. Also acts as a negative regulator of T-cell development: inhibits gamma-delta T-cell proliferation via demethylation of JAG1 and NOTCH2 transcripts. Inhibits regulatory T-cell (Treg) recruitment by mediating demethylation and destabilization of CCL28 mRNAs. The chain is RNA demethylase ALKBH5 from Mus musculus (Mouse).